Here is a 360-residue protein sequence, read N- to C-terminus: Phospho-N-acetylmuramoyl-pentapeptide-transferase (360 aa).

10 consecutive transmembrane segments (helical) span residues 27 to 47, 73 to 93, 97 to 117, 145 to 165, 168 to 188, 199 to 219, 236 to 256, 263 to 283, 288 to 308, and 337 to 357; these read ILGV…VIVL, TMGG…WGDL, YVWV…VDDY, AFYL…VPLF, VAIP…VGTS, GLAI…AYLT, SGEL…FLWF, IFMG…IAVI, LVLF…ILQV, and KVIV…FATL.

It belongs to the glycosyltransferase 4 family. MraY subfamily. It depends on Mg(2+) as a cofactor.

The protein localises to the cell inner membrane. The catalysed reaction is UDP-N-acetyl-alpha-D-muramoyl-L-alanyl-gamma-D-glutamyl-meso-2,6-diaminopimeloyl-D-alanyl-D-alanine + di-trans,octa-cis-undecaprenyl phosphate = di-trans,octa-cis-undecaprenyl diphospho-N-acetyl-alpha-D-muramoyl-L-alanyl-D-glutamyl-meso-2,6-diaminopimeloyl-D-alanyl-D-alanine + UMP. It participates in cell wall biogenesis; peptidoglycan biosynthesis. Its function is as follows. Catalyzes the initial step of the lipid cycle reactions in the biosynthesis of the cell wall peptidoglycan: transfers peptidoglycan precursor phospho-MurNAc-pentapeptide from UDP-MurNAc-pentapeptide onto the lipid carrier undecaprenyl phosphate, yielding undecaprenyl-pyrophosphoryl-MurNAc-pentapeptide, known as lipid I. The polypeptide is Phospho-N-acetylmuramoyl-pentapeptide-transferase (Marinomonas sp. (strain MWYL1)).